Reading from the N-terminus, the 123-residue chain is WAP four-disulfide core domain protein 5 (123 aa).

The first 24 residues, 1–24 (MRTQSLLLLGALLAVGSQLPAVFG), serve as a signal peptide directing secretion. WAP domains are found at residues 27–73 (KGEK…CVPR) and 74–121 (VSVK…RDPA). 8 disulfide bridges follow: Cys-34/Cys-62, Cys-41/Cys-66, Cys-49/Cys-61, Cys-55/Cys-70, Cys-81/Cys-109, Cys-88/Cys-113, Cys-96/Cys-108, and Cys-102/Cys-117.

It localises to the secreted. Putative acid-stable proteinase inhibitor. This is WAP four-disulfide core domain protein 5 (WFDC5) from Pan troglodytes (Chimpanzee).